The primary structure comprises 375 residues: Trans-enoyl reductase BOA5 (375 aa).

The span at 1-16 shows a compositional bias: polar residues; it reads MQAVIQTGPGTLQLTE. The segment at 1–21 is disordered; the sequence is MQAVIQTGPGTLQLTENVPKP. 42–45 is an NADP(+) binding site; the sequence is SDWK. A substrate-binding site is contributed by 121–128; sequence VGIVTTGL. Positions 147–168 are disordered; it reads GSAAPQKTRVGPRGWSGGDALT. NADP(+)-binding positions include 185–188, 208–211, Tyr226, and 273–274; these read STST, SPHN, and LD. 294–298 provides a ligand contact to substrate; that stretch reads ALTIF. Residue 363–364 participates in NADP(+) binding; that stretch reads VS.

The protein belongs to the zinc-containing alcohol dehydrogenase family. As to quaternary structure, monomer.

The protein operates within polyketide biosynthesis. Its function is as follows. Trans-enoyl reductase; part of the gene cluster A that mediates the biosynthesis of botcinic acid and its botcinin derivatives, acetate-derived polyketides that contribute to virulence when combined with the sesquiterpene botrydial. Botcinic acid and its derivatives have been shown to induce chlorosis and necrosis during host plant infection, but also have antifungal activities. Two polyketide synthases, BOA6 and BOA9, are involved in the biosynthesis of botcinins. BOA6 mediates the formation of the per-methylated tetraketide core by condensation of four units of malonyl-CoA with one unit of acetyl-CoA, which would be methylated in activated methylene groups to yield a bicyclic acid intermediate that could then either be converted to botrylactone derivatives or lose the starter acetate unit through a retro-Claisen type C-C bond cleavage to yield botcinin derivatives. The second polyketide synthase, BOA9, is probably required for the biosynthesis of the tetraketide side chain of botcinins. The methyltransferase (MT) domain within BOA6 is probably responsible for the incorporation of four methyl groups. The trans-enoyl reductase BOA5 might take over the enoyl reductase function of BOA6 that misses an ER domain. The monooxygenases BOA2, BOA3 and BOA4 might be involved in further hydroxylations at C4, C5 and C8, whereas BOA7, close to BOA9, could potentially be involved in the hydroxylation at C4 in the side chain of botcinins. In Botryotinia fuckeliana (strain B05.10) (Noble rot fungus), this protein is Trans-enoyl reductase BOA5.